A 461-amino-acid chain; its full sequence is UDP-glycosyltransferase 82A1 (461 aa).

UDP-alpha-D-glucose is bound by residues Ser-292, 349–351 (APQ), 366–374 (HCGWNSTME), and 388–391 (AGDQ).

Belongs to the UDP-glycosyltransferase family.

This is UDP-glycosyltransferase 82A1 (UGT82A1) from Arabidopsis thaliana (Mouse-ear cress).